Here is a 187-residue protein sequence, read N- to C-terminus: Putative AgrB-like protein 1 (187 aa).

The next 5 helical transmembrane spans lie at 29–49 (VVIV…IAGI), 50–70 (LGYF…KPFI), 81–98 (CFIA…LVTF), 103–120 (LFSI…IYNK), and 149–169 (ILFL…TITW).

This sequence belongs to the AgrB family.

It is found in the cell membrane. May be involved in the proteolytic processing of a quorum sensing system signal molecule precursor. The chain is Putative AgrB-like protein 1 from Clostridium perfringens (strain 13 / Type A).